Here is a 438-residue protein sequence, read N- to C-terminus: Protein translocase subunit SecY (438 aa).

10 helical membrane-spanning segments follow: residues 18–38 (ILFTLGILVLYRVSAALPSPG), 76–96 (VGVMPYITASIIVQLLTVVIP), 121–141 (IALAVLQATSIVALAANGGLL), 154–174 (IFSLVVIVLVMTGGAALVMWM), 177–197 (LITERGIGNGMSLLIFVGIAA), 212–232 (GVIFAAVCLAALVIIVGVVFV), 269–289 (VIPVIFASSLIYIPHLITQLV), 315–335 (PVYINIYFGLIIFFTYFYVSV), 375–395 (LPGSIYLGAIAVLPNLFLQIG), and 398–418 (GEVQNLPFGGTAVLIMIGVGL).

It belongs to the SecY/SEC61-alpha family. In terms of assembly, component of the Sec protein translocase complex. Heterotrimer consisting of SecY, SecE and SecG subunits. The heterotrimers can form oligomers, although 1 heterotrimer is thought to be able to translocate proteins. Interacts with the ribosome. Interacts with SecDF, and other proteins may be involved. Interacts with SecA.

It is found in the cell membrane. Its function is as follows. The central subunit of the protein translocation channel SecYEG. Consists of two halves formed by TMs 1-5 and 6-10. These two domains form a lateral gate at the front which open onto the bilayer between TMs 2 and 7, and are clamped together by SecE at the back. The channel is closed by both a pore ring composed of hydrophobic SecY resides and a short helix (helix 2A) on the extracellular side of the membrane which forms a plug. The plug probably moves laterally to allow the channel to open. The ring and the pore may move independently. This is Protein translocase subunit SecY from Mycobacterium leprae (strain TN).